A 296-amino-acid polypeptide reads, in one-letter code: Cobalamin trafficking protein CblD (296 aa).

The N-terminal 38 residues, 1–38, are a transit peptide targeting the mitochondrion; that stretch reads MAHVLCNRARLVSYLPGFCSLVKRVINPRAFSTAGSSG. The residue at position 203 (Lys203) is an N6-acetyllysine.

In terms of assembly, heterodimer with MMACHC. Forms a multiprotein complex with MMACHC, MTR and MTRR.

It is found in the cytoplasm. Its subcellular location is the mitochondrion. Functionally, involved in cobalamin metabolism and trafficking. Plays a role in regulating the biosynthesis and the proportion of two coenzymes, methylcob(III)alamin (MeCbl) and 5'-deoxyadenosylcobalamin (AdoCbl). Promotes oxidation of cob(II)alamin bound to MMACHC. The processing of cobalamin in the cytosol occurs in a multiprotein complex composed of at least MMACHC, MMADHC, MTRR (methionine synthase reductase) and MTR (methionine synthase) which may contribute to shuttle safely and efficiently cobalamin towards MTR in order to produce methionine. The polypeptide is Cobalamin trafficking protein CblD (Mus musculus (Mouse)).